A 399-amino-acid polypeptide reads, in one-letter code: Tyrosine--tRNA ligase (399 aa).

Tyr-36 contributes to the L-tyrosine binding site. Residues 41–50 (PTAPSLHIGN) carry the 'HIGH' region motif. Residues Tyr-166 and Gln-170 each coordinate L-tyrosine. Residues 226 to 230 (KMGKS) carry the 'KMSKS' region motif. An ATP-binding site is contributed by Lys-229. The region spanning 332 to 395 (TRLVDVIVDL…KKRFVTVQVI (64 aa)) is the S4 RNA-binding domain.

It belongs to the class-I aminoacyl-tRNA synthetase family. TyrS type 1 subfamily. In terms of assembly, homodimer.

It is found in the cytoplasm. The enzyme catalyses tRNA(Tyr) + L-tyrosine + ATP = L-tyrosyl-tRNA(Tyr) + AMP + diphosphate + H(+). Catalyzes the attachment of tyrosine to tRNA(Tyr) in a two-step reaction: tyrosine is first activated by ATP to form Tyr-AMP and then transferred to the acceptor end of tRNA(Tyr). The chain is Tyrosine--tRNA ligase from Mycoplasma pneumoniae (strain ATCC 29342 / M129 / Subtype 1) (Mycoplasmoides pneumoniae).